A 119-amino-acid chain; its full sequence is Ribonuclease P protein component (119 aa).

A disordered region spans residues M1–R24. Residues R8 to R21 are compositionally biased toward basic and acidic residues.

This sequence belongs to the RnpA family. In terms of assembly, consists of a catalytic RNA component (M1 or rnpB) and a protein subunit.

The catalysed reaction is Endonucleolytic cleavage of RNA, removing 5'-extranucleotides from tRNA precursor.. Its function is as follows. RNaseP catalyzes the removal of the 5'-leader sequence from pre-tRNA to produce the mature 5'-terminus. It can also cleave other RNA substrates such as 4.5S RNA. The protein component plays an auxiliary but essential role in vivo by binding to the 5'-leader sequence and broadening the substrate specificity of the ribozyme. The polypeptide is Ribonuclease P protein component (Syntrophobacter fumaroxidans (strain DSM 10017 / MPOB)).